The sequence spans 1068 residues: MNSIKNVPARVLSRRPGHSLEAEREQFDKTQAISISKAINSQEAPVKEKHARRIILGTHHEKGAFTFWSYAIGLPLSSSSILSWKFCHVLHKVLRDGHPNVLHDYQRYRSNIREIGDLWGHLRDQYGHLVNIYTKLLLTKISFHLKHPQFPAGLEVTDEVLEKAAGTDVNNIFQLTVEMFDYMDCELKLSESVFRQLNTAIAVSQMSSGQCRLAPLIQVIQDCSHLYHYTVKLMFKLHSCLPADTLQGHRDRFHEQFHSLKNFFRRASDMLYFKRLIQIPRLPEGPPNFLRASALAEHIKPVVVIPEEAPEEEEPENLIEISSAPPAGEPVVVADLFDQTFGPPNGSMKDDRDLQIENLKREVETLRAELEKIKMEAQRYISQLKGQVNGLEAELEEQRKQKQKALVDNEQLRHELAQLKALQLEGARNQGLREEAERKASATEARYSKLKEKHSELINTHAELLRKNADTAKQLTVTQQSQEEVARVKEQLAFQMEQAKRESEMKMEEQSDQLEKLKRELAARAGELARAQEALSRTEQSGSELSSRLDTLNAEKEALSGVVRQREAELLAAQSLVREKEEALSQEQQRSSQEKGELRGQLAEKESQEQGLRQKLLDEQLAVLRSAAAEAEAILQDAVSKLDDPLHLRCTSSPDYLVSRAQAALDSVSGLEQGHTQYLASSEDASALVAALTRFSHLAADTIVNGAATSHLAPTDPADRLMDTCRECGARALELVGQLQDQTVLPRAQPSLMRAPLQGILQLGQDLKPKSLDVRQEELGAMVDKEMAATSAAIEDAVRRIEDMMSQARHESSGVKLEVNERILNSCTDLMKAIRLLVMTSTSLQKEIVESGRGAATQQEFYAKNSRWTEGLISASKAVGWGATQLVESADKVVLHMGKYEELIVCSHEIAASTAQLVAASKVKANKNSPHLSRLQECSRTVNERAANVVASTKSGQEQIEDRDTMDFSGLSLIKLKKQEMETQVRVLELEKTLEAERVRLGELRKQHYVLAGGMGTPSEEEPSRPSPAPRSGATKKPPLAQKPSIAPRTDNQLDKKDGVYPAQLVNY.

Met-1 is subject to N-acetylmethionine. One can recognise an ENTH domain in the interval 23-151; it reads EREQFDKTQA…SFHLKHPQFP (129 aa). A coiled-coil region spans residues 346-644; the sequence is GSMKDDRDLQ…LQDAVSKLDD (299 aa). A disordered region spans residues 582–610; sequence EALSQEQQRSSQEKGELRGQLAEKESQEQ. Positions 592-608 are enriched in basic and acidic residues; that stretch reads SQEKGELRGQLAEKESQ. The I/LWEQ domain maps to 771–1012; that stretch reads SLDVRQEELG…ELRKQHYVLA (242 aa). The segment at 867-924 is important for actin binding; sequence RWTEGLISASKAVGWGATQLVESADKVVLHMGKYEELIVCSHEIAASTAQLVAASKVK. The segment at 1011–1068 is disordered; the sequence is LAGGMGTPSEEEPSRPSPAPRSGATKKPPLAQKPSIAPRTDNQLDKKDGVYPAQLVNY.

This sequence belongs to the SLA2 family. As to quaternary structure, homodimer. Interacts with actin; homodimerization promotes actin binding. Interacts with CLTB. Interacts with HIP1. Interacts (via ENTH and I/LWEQ domains) with BCL2L10. Widely expressed. Expressed at lower levels in skeletal muscle and heart. The level of expression does not change appreciably during development.

It is found in the cytoplasm. Its subcellular location is the perinuclear region. The protein localises to the endomembrane system. It localises to the cytoplasmic vesicle. The protein resides in the clathrin-coated vesicle membrane. Its function is as follows. Component of clathrin-coated pits and vesicles, that may link the endocytic machinery to the actin cytoskeleton. Binds 3-phosphoinositides (via ENTH domain). May act through the ENTH domain to promote cell survival by stabilizing receptor tyrosine kinases following ligand-induced endocytosis. This chain is Huntingtin-interacting protein 1-related protein (Hip1r), found in Mus musculus (Mouse).